Here is a 595-residue protein sequence, read N- to C-terminus: Transketolase-like protein 1 (595 aa).

93-95 (GWP) provides a ligand contact to thiamine diphosphate. The Mg(2+) site is built by Asp-125, Asn-155, and Ile-157. A thiamine diphosphate-binding site is contributed by Asn-155. Residues Lys-217, Glu-339, and Phe-365 each coordinate thiamine diphosphate. The active-site Proton donor is Glu-339. Residues His-389 and Asp-397 each contribute to the substrate site. His-401 is a binding site for thiamine diphosphate.

This sequence belongs to the transketolase family. As to quaternary structure, homodimer. Mg(2+) is required as a cofactor. The cofactor is Ca(2+). Mn(2+) serves as cofactor. It depends on Co(2+) as a cofactor. Requires thiamine diphosphate as cofactor. As to expression, not expressed in the embryonic neocortex.

It is found in the cytoplasm. It catalyses the reaction D-sedoheptulose 7-phosphate + D-glyceraldehyde 3-phosphate = aldehydo-D-ribose 5-phosphate + D-xylulose 5-phosphate. In terms of biological role, catalyzes the transfer of a two-carbon ketol group from a ketose donor to an aldose acceptor, via a covalent intermediate with the cofactor thiamine pyrophosphate. In Mus musculus (Mouse), this protein is Transketolase-like protein 1.